Consider the following 526-residue polypeptide: MALLNTPVLAAATAVSFGFYLAGLFVYRVFYHRLSHIPGPRLAAFTVYYQSYYDFFPHQGQFLWKLVELHKAYGPIIRIGPDEVHVNDARFYKEMYGSSVHKRNKSPIWYWMDGLGAVGDQSMFITLDHDHHRLRKAGLGTYFSKRKVQELEPRVKEKVLLLRQRLLERAGRGAINLKDAFGGMALDIITQYCFNQCMGALDRDDLGREWNQLMAAGVKINPFARTFPTVARTLLRLPKWVLGVSGMVSTTGEFLDLADRLSANARNEAIRDLQEGKYTLTDDADSRTVLHSMMRSDVLPEHEKGERRLQADGMTLIAAGFDTTSRTLTVVFYHLLAKPAMRARVLEEIRTLMPTPSSPLPTVAQLEQLPYLTCVIHEGTRLAHGVAGRLVRIAPEEDLVYHNSSDDTEYTIPRGATFGQSSYLVHTDESIYPNPHDFIPERYWSDDGKPTDAERYLVAFGKGTRMCSGINLAFAELYLTIAALLGAVDMKLAPGTTEHDVSLVAELFVGVLPESPGVRVNVVGSL.

A helical transmembrane segment spans residues 7–27 (PVLAAATAVSFGFYLAGLFVY). The N-linked (GlcNAc...) asparagine glycan is linked to Asn-403. Position 467 (Cys-467) interacts with heme.

Belongs to the cytochrome P450 family. Heme is required as a cofactor.

The protein localises to the membrane. It functions in the pathway mycotoxin biosynthesis. In terms of biological role, cytochrome P450 monooxygenase; part of the gene cluster that mediates the biosynthesis of UCS1025A, a member of the pyrrolizidinone family that acts as a strong telomerase inhibitor and displays potent antibacterial and antitumor properties. These compounds share a hemiaminal-containing pyrrolizidinone core fused with a gamma-lactone, giving a furopyrrolizidine that is connected to a decalin fragment. The polyketide synthase module (PKS) of the PKS-NRPS ucsA is responsible for the synthesis of the polyketide backbone via the condensation of an acetyl-CoA starter unit with 6 malonyl-CoA units. The downstream nonribosomal peptide synthetase (NRPS) module then amidates the carboxyl end of the polyketide with a 2S,3S-methylproline derived from L-isoleucine by the 2-oxoglutarate-dependent dioxygenase ucsF which converts L-isoleucine to (4S,5S)-4-methylpyrroline-5-carboxylate that is further converted to 2S,3S-methylproline by the pyrroline-5-carboxylate reductase ucsG. Reductive release of the completed aminoacyl polyketide from the assembly line can form the 3-pyrrolin-2-one structure via an intramolecular Knoevenagel reaction. Because ucsA lacks a designated enoylreductase (ER) domain, the required activity is provided the enoyl reductase ucsL. This keto acyclic precursor is the substrate of the Diels-Alderase ucsH, that catalyzes the Diels-Alder cycloaddition. Oxidation of the 3S-methyl group to a carboxylate by the cytochrome P450 monooxygenase ucsK allows an oxa-Michael cyclization that might involve the reductase/dehydrogenase ucsI and which furnishes the furopyrrolizidine. The oxidase ucsJ likely plays a critical role in stereoselective reduction of the C5-C6 double bond to afford the required R-configured carboxylate group. Further enolization and oxidation at C5 by an unidentified enzyme affords the last intermediate that can undergo oxa-Michael cyclization to yield UCS1025A. This Acremonium sp protein is Cytochrome P450 monooxygenase ucsK.